Here is a 158-residue protein sequence, read N- to C-terminus: Glutathione peroxidase homolog BsaA (158 aa).

Cys36 is a catalytic residue.

Belongs to the glutathione peroxidase family.

The protein is Glutathione peroxidase homolog BsaA (bsaA) of Staphylococcus epidermidis (strain ATCC 12228 / FDA PCI 1200).